A 156-amino-acid polypeptide reads, in one-letter code: Endoribonuclease YbeY (156 aa).

Zn(2+) is bound by residues His122, His126, and His132.

Belongs to the endoribonuclease YbeY family. It depends on Zn(2+) as a cofactor.

It is found in the cytoplasm. In terms of biological role, single strand-specific metallo-endoribonuclease involved in late-stage 70S ribosome quality control and in maturation of the 3' terminus of the 16S rRNA. The protein is Endoribonuclease YbeY of Bacillus cereus (strain G9842).